Here is a 216-residue protein sequence, read N- to C-terminus: UDP-N-acetylglucosamine transferase subunit ALG14 (216 aa).

The Lumenal portion of the chain corresponds to 1 to 3; that stretch reads MVC. A helical transmembrane segment spans residues 4–24; sequence VLTLAASAGGLAVLLIVRLWA. Over 25–216 the chain is Cytoplasmic; the sequence is VLRSHPVTPR…PKSVYLGRIV (192 aa).

This sequence belongs to the ALG14 family. As to quaternary structure, forms with ALG13 the active heterodimeric UDP-N-acetylglucosamine transferase complex.

The protein resides in the endoplasmic reticulum membrane. Functionally, part of the UDP-N-acetylglucosamine transferase complex that operates in the biosynthetic pathway of dolichol-linked oligosaccharides, the glycan precursors employed in protein asparagine (N)-glycosylation. The assembly of dolichol-linked oligosaccharides begins on the cytosolic side of the endoplasmic reticulum membrane and finishes in its lumen. The sequential addition of sugars to dolichol pyrophosphate produces dolichol-linked oligosaccharides containing fourteen sugars, including two GlcNAcs, nine mannoses and three glucoses. Once assembled, the oligosaccharides are transferred from the lipid to nascent proteins by oligosaccharyltransferases. Functions as a protein-membrane adapter recruiting ALG13 at the cytoplasmic face of the endoplasmic reticulum, where the complex catalyzes the second step of dolichol pyrophosphate biosynthesis, transferring a beta1,4-linked N-acetylglucosamine (GlcNAc) from UDP-GlcNAc to GlcNAc-pyrophosphatedolichol (Gn-PDol) to produce N,N'-diacetylchitobiosyl diphosphodolichol. N,N'-diacetylchitobiosyl diphosphodolichol is a substrate for ALG1, the following enzyme in the biosynthetic pathway. In Rattus norvegicus (Rat), this protein is UDP-N-acetylglucosamine transferase subunit ALG14.